Consider the following 211-residue polypeptide: Thiamine-phosphate synthase (211 aa).

Residues 37–41 (QLRIK) and Asn69 contribute to the 4-amino-2-methyl-5-(diphosphooxymethyl)pyrimidine site. 2 residues coordinate Mg(2+): Asp70 and Asp89. Ser108 contributes to the 4-amino-2-methyl-5-(diphosphooxymethyl)pyrimidine binding site. Position 134 to 136 (134 to 136 (TQT)) interacts with 2-[(2R,5Z)-2-carboxy-4-methylthiazol-5(2H)-ylidene]ethyl phosphate. Lys137 is a binding site for 4-amino-2-methyl-5-(diphosphooxymethyl)pyrimidine. 2-[(2R,5Z)-2-carboxy-4-methylthiazol-5(2H)-ylidene]ethyl phosphate-binding positions include Gly166 and 186-187 (IS).

It belongs to the thiamine-phosphate synthase family. Requires Mg(2+) as cofactor.

The enzyme catalyses 2-[(2R,5Z)-2-carboxy-4-methylthiazol-5(2H)-ylidene]ethyl phosphate + 4-amino-2-methyl-5-(diphosphooxymethyl)pyrimidine + 2 H(+) = thiamine phosphate + CO2 + diphosphate. The catalysed reaction is 2-(2-carboxy-4-methylthiazol-5-yl)ethyl phosphate + 4-amino-2-methyl-5-(diphosphooxymethyl)pyrimidine + 2 H(+) = thiamine phosphate + CO2 + diphosphate. It catalyses the reaction 4-methyl-5-(2-phosphooxyethyl)-thiazole + 4-amino-2-methyl-5-(diphosphooxymethyl)pyrimidine + H(+) = thiamine phosphate + diphosphate. It functions in the pathway cofactor biosynthesis; thiamine diphosphate biosynthesis; thiamine phosphate from 4-amino-2-methyl-5-diphosphomethylpyrimidine and 4-methyl-5-(2-phosphoethyl)-thiazole: step 1/1. Its function is as follows. Condenses 4-methyl-5-(beta-hydroxyethyl)thiazole monophosphate (THZ-P) and 2-methyl-4-amino-5-hydroxymethyl pyrimidine pyrophosphate (HMP-PP) to form thiamine monophosphate (TMP). The protein is Thiamine-phosphate synthase of Shigella boydii serotype 4 (strain Sb227).